We begin with the raw amino-acid sequence, 196 residues long: MNDAINHTACETLFTQARTHNGWLDKPVSDAQLQAVWDLMKMGPTSANCSPARIVFVRSAEGKEKLRPTLSSGNLQKTMQAPVTAIVAWDSAFYDRLPTLFPHGDARSWFTSSPQLAEETAFRNSSLQAAYLIFACRARGLDTGPMSGFDREKVDAAFFADNGWKSNLLVNIGYGDPGKLYGRLPRLSFDEACLLA.

This sequence belongs to the nitroreductase family. HadB/RutE subfamily. The cofactor is FMN.

It carries out the reaction 3-hydroxypropanoate + NADP(+) = 3-oxopropanoate + NADPH + H(+). In terms of biological role, may reduce toxic product malonic semialdehyde to 3-hydroxypropionic acid, which is excreted. This Klebsiella pneumoniae subsp. pneumoniae (strain ATCC 700721 / MGH 78578) protein is Probable malonic semialdehyde reductase RutE.